The chain runs to 252 residues: 5-oxoprolinase subunit A (252 aa).

It belongs to the LamB/PxpA family. Forms a complex composed of PxpA, PxpB and PxpC.

The enzyme catalyses 5-oxo-L-proline + ATP + 2 H2O = L-glutamate + ADP + phosphate + H(+). In terms of biological role, catalyzes the cleavage of 5-oxoproline to form L-glutamate coupled to the hydrolysis of ATP to ADP and inorganic phosphate. The protein is 5-oxoprolinase subunit A of Mycolicibacterium paratuberculosis (strain ATCC BAA-968 / K-10) (Mycobacterium paratuberculosis).